The following is a 149-amino-acid chain: D-aminoacyl-tRNA deacylase (149 aa).

The Gly-cisPro motif, important for rejection of L-amino acids signature appears at Gly-137–Pro-138.

The protein belongs to the DTD family. In terms of assembly, homodimer.

Its subcellular location is the cytoplasm. It catalyses the reaction glycyl-tRNA(Ala) + H2O = tRNA(Ala) + glycine + H(+). It carries out the reaction a D-aminoacyl-tRNA + H2O = a tRNA + a D-alpha-amino acid + H(+). Functionally, an aminoacyl-tRNA editing enzyme that deacylates mischarged D-aminoacyl-tRNAs. Also deacylates mischarged glycyl-tRNA(Ala), protecting cells against glycine mischarging by AlaRS. Acts via tRNA-based rather than protein-based catalysis; rejects L-amino acids rather than detecting D-amino acids in the active site. By recycling D-aminoacyl-tRNA to D-amino acids and free tRNA molecules, this enzyme counteracts the toxicity associated with the formation of D-aminoacyl-tRNA entities in vivo and helps enforce protein L-homochirality. This is D-aminoacyl-tRNA deacylase from Herminiimonas arsenicoxydans.